We begin with the raw amino-acid sequence, 233 residues long: uncharacterized protein (233 aa).

Positions 196–212 (FFYEDYLIFDCRAKRRK) are the nascent chain stimulates ribosomal stalling during translation by interfering with the conformation of the peptidyl transferase center (PTC), and the translating mRNA by adopting a difficult-to-decode structure at the ribosome decoding center.

Acts as an endogenous target of the ribosome quality control (RQC) pathway. During translation, the nascent chain has a propensity to stall ribosomes, thereby stimulating activation of the RQC pathway. This is an uncharacterized protein from Saccharomyces cerevisiae (strain ATCC 204508 / S288c) (Baker's yeast).